Here is a 141-residue protein sequence, read N- to C-terminus: uncharacterized protein (141 aa).

Helical transmembrane passes span 64–84 and 112–132; these read IAAV…IEAI and IVGS…LVLI.

It localises to the cell membrane. This is an uncharacterized protein from Sinorhizobium fredii (strain NBRC 101917 / NGR234).